The following is a 1006-amino-acid chain: Probable beta-galactosidase A (1006 aa).

Residues 1-18 (MKLLSVCAIALLAAQAAG) form the signal peptide. Substrate-binding residues include Y96, N140, A141, and E142. N156 carries N-linked (GlcNAc...) asparagine glycosylation. N199 contacts substrate. E200 functions as the Proton donor in the catalytic mechanism. Cysteines 205 and 206 form a disulfide. Residue Y260 participates in substrate binding. C266 and C315 form a disulfide bridge. E298 acts as the Nucleophile in catalysis. Y364 serves as a coordination point for substrate. N-linked (GlcNAc...) asparagine glycans are attached at residues N373, N402, N422, N622, N760, N777, and N914.

Belongs to the glycosyl hydrolase 35 family.

Its subcellular location is the secreted. The enzyme catalyses Hydrolysis of terminal non-reducing beta-D-galactose residues in beta-D-galactosides.. Its function is as follows. Cleaves beta-linked terminal galactosyl residues from gangliosides, glycoproteins, and glycosaminoglycans. This chain is Probable beta-galactosidase A (lacA), found in Aspergillus fumigatus (strain CBS 144.89 / FGSC A1163 / CEA10) (Neosartorya fumigata).